Consider the following 145-residue polypeptide: D-aminoacyl-tRNA deacylase (145 aa).

The Gly-cisPro motif, important for rejection of L-amino acids signature appears at Gly-137 to Pro-138.

The protein belongs to the DTD family. As to quaternary structure, homodimer.

It is found in the cytoplasm. The catalysed reaction is glycyl-tRNA(Ala) + H2O = tRNA(Ala) + glycine + H(+). It carries out the reaction a D-aminoacyl-tRNA + H2O = a tRNA + a D-alpha-amino acid + H(+). Functionally, an aminoacyl-tRNA editing enzyme that deacylates mischarged D-aminoacyl-tRNAs. Also deacylates mischarged glycyl-tRNA(Ala), protecting cells against glycine mischarging by AlaRS. Acts via tRNA-based rather than protein-based catalysis; rejects L-amino acids rather than detecting D-amino acids in the active site. By recycling D-aminoacyl-tRNA to D-amino acids and free tRNA molecules, this enzyme counteracts the toxicity associated with the formation of D-aminoacyl-tRNA entities in vivo and helps enforce protein L-homochirality. The chain is D-aminoacyl-tRNA deacylase from Carboxydothermus hydrogenoformans (strain ATCC BAA-161 / DSM 6008 / Z-2901).